Consider the following 102-residue polypeptide: Large ribosomal subunit protein bL21 (102 aa).

It belongs to the bacterial ribosomal protein bL21 family. In terms of assembly, part of the 50S ribosomal subunit. Contacts protein L20.

Functionally, this protein binds to 23S rRNA in the presence of protein L20. This is Large ribosomal subunit protein bL21 from Listeria monocytogenes serotype 4b (strain F2365).